The sequence spans 482 residues: UDP-N-acetylmuramoyl-L-alanyl-D-glutamate--2,6-diaminopimelate ligase (482 aa).

Serine 29 serves as a coordination point for UDP-N-acetyl-alpha-D-muramoyl-L-alanyl-D-glutamate. Residue 109 to 115 (GTNGKTS) coordinates ATP. Residues 151–152 (TT), serine 178, and arginine 186 contribute to the UDP-N-acetyl-alpha-D-muramoyl-L-alanyl-D-glutamate site. Lysine 218 carries the N6-carboxylysine modification. Meso-2,6-diaminopimelate-binding positions include arginine 375, 399–402 (DNPR), glycine 451, and glutamate 455. The short motif at 399–402 (DNPR) is the Meso-diaminopimelate recognition motif element.

It belongs to the MurCDEF family. MurE subfamily. Mg(2+) serves as cofactor. In terms of processing, carboxylation is probably crucial for Mg(2+) binding and, consequently, for the gamma-phosphate positioning of ATP.

Its subcellular location is the cytoplasm. It catalyses the reaction UDP-N-acetyl-alpha-D-muramoyl-L-alanyl-D-glutamate + meso-2,6-diaminopimelate + ATP = UDP-N-acetyl-alpha-D-muramoyl-L-alanyl-gamma-D-glutamyl-meso-2,6-diaminopimelate + ADP + phosphate + H(+). The protein operates within cell wall biogenesis; peptidoglycan biosynthesis. Its function is as follows. Catalyzes the addition of meso-diaminopimelic acid to the nucleotide precursor UDP-N-acetylmuramoyl-L-alanyl-D-glutamate (UMAG) in the biosynthesis of bacterial cell-wall peptidoglycan. The sequence is that of UDP-N-acetylmuramoyl-L-alanyl-D-glutamate--2,6-diaminopimelate ligase from Caldanaerobacter subterraneus subsp. tengcongensis (strain DSM 15242 / JCM 11007 / NBRC 100824 / MB4) (Thermoanaerobacter tengcongensis).